Reading from the N-terminus, the 493-residue chain is Glycerol kinase (493 aa).

An ADP-binding site is contributed by Thr13. Positions 13, 14, and 15 each coordinate ATP. Thr13 serves as a coordination point for sn-glycerol 3-phosphate. ADP is bound at residue Arg17. Sn-glycerol 3-phosphate-binding residues include Arg83, Glu84, Tyr135, and Asp244. Glycerol contacts are provided by Arg83, Glu84, Tyr135, Asp244, and Gln245. Positions 266 and 309 each coordinate ADP. ATP-binding residues include Thr266, Gly309, Gln313, and Gly410. ADP contacts are provided by Gly410 and Asn414.

It belongs to the FGGY kinase family.

It catalyses the reaction glycerol + ATP = sn-glycerol 3-phosphate + ADP + H(+). It participates in polyol metabolism; glycerol degradation via glycerol kinase pathway; sn-glycerol 3-phosphate from glycerol: step 1/1. With respect to regulation, inhibited by fructose 1,6-bisphosphate (FBP). Functionally, key enzyme in the regulation of glycerol uptake and metabolism. Catalyzes the phosphorylation of glycerol to yield sn-glycerol 3-phosphate. This chain is Glycerol kinase, found in Shewanella piezotolerans (strain WP3 / JCM 13877).